The chain runs to 81 residues: Cytochrome b559 subunit alpha (81 aa).

The chain crosses the membrane as a helical span at residues 21–35 (VIHSITIPMLFIAGW). Heme is bound at residue H23.

This sequence belongs to the PsbE/PsbF family. Heterodimer of an alpha subunit and a beta subunit. PSII is composed of 1 copy each of membrane proteins PsbA, PsbB, PsbC, PsbD, PsbE, PsbF, PsbH, PsbI, PsbJ, PsbK, PsbL, PsbM, PsbT, PsbX, PsbY, PsbZ, Psb30/Ycf12, peripheral proteins PsbO, CyanoQ (PsbQ), PsbU, PsbV and a large number of cofactors. It forms dimeric complexes. The cofactor is heme b.

The protein resides in the cellular thylakoid membrane. Functionally, this b-type cytochrome is tightly associated with the reaction center of photosystem II (PSII). PSII is a light-driven water:plastoquinone oxidoreductase that uses light energy to abstract electrons from H(2)O, generating O(2) and a proton gradient subsequently used for ATP formation. It consists of a core antenna complex that captures photons, and an electron transfer chain that converts photonic excitation into a charge separation. The chain is Cytochrome b559 subunit alpha from Rippkaea orientalis (strain PCC 8801 / RF-1) (Cyanothece sp. (strain PCC 8801)).